The sequence spans 312 residues: Ribosomal protein L11 methyltransferase (312 aa).

Positions 160, 181, 203, and 246 each coordinate S-adenosyl-L-methionine.

Belongs to the methyltransferase superfamily. PrmA family.

It is found in the cytoplasm. The enzyme catalyses L-lysyl-[protein] + 3 S-adenosyl-L-methionine = N(6),N(6),N(6)-trimethyl-L-lysyl-[protein] + 3 S-adenosyl-L-homocysteine + 3 H(+). Functionally, methylates ribosomal protein L11. This Staphylococcus aureus (strain MRSA252) protein is Ribosomal protein L11 methyltransferase.